The sequence spans 201 residues: Orotate phosphoribosyltransferase (201 aa).

Residue 113–121 participates in 5-phospho-alpha-D-ribose 1-diphosphate binding; that stretch reads EDIITTGKS. Orotate is bound by residues threonine 117 and arginine 145.

The protein belongs to the purine/pyrimidine phosphoribosyltransferase family. PyrE subfamily. As to quaternary structure, homodimer. Requires Mg(2+) as cofactor.

It carries out the reaction orotidine 5'-phosphate + diphosphate = orotate + 5-phospho-alpha-D-ribose 1-diphosphate. It functions in the pathway pyrimidine metabolism; UMP biosynthesis via de novo pathway; UMP from orotate: step 1/2. Catalyzes the transfer of a ribosyl phosphate group from 5-phosphoribose 1-diphosphate to orotate, leading to the formation of orotidine monophosphate (OMP). The chain is Orotate phosphoribosyltransferase from Helicobacter pylori (strain HPAG1).